Consider the following 183-residue polypeptide: MEFKTYSDFFDKNANSIINWFEGELAKVRSGRANLKILDNVRAEYYGEQTPLIEMASLSIPEPREILIKPYEKSSVNLIQAALLKANLNLTPVVDGDKIRIKLPLLTEENRKENVKKVKAVGEKAKQEVRFIRRDTLNKIKSDKIADKDLNKYFEEQVDKITKKYIDQIDSILAKKEKDLLSL.

This sequence belongs to the RRF family.

The protein localises to the cytoplasm. Functionally, responsible for the release of ribosomes from messenger RNA at the termination of protein biosynthesis. May increase the efficiency of translation by recycling ribosomes from one round of translation to another. This Mycoplasmoides gallisepticum (strain R(low / passage 15 / clone 2)) (Mycoplasma gallisepticum) protein is Ribosome-recycling factor.